Consider the following 268-residue polypeptide: MSSKVHLGHTARKRFGQNFLTDDNVINRIVGAIAPDNDHVMVEIGPGLGALTEPVATAIDNLTVVELDRDLVERLQNHPVLKDKLTIHQGDALQFDFSQLVVPGKKLKVFGNLPYNISTPLMFHLFEFAEQIETMHFMLQKEVVLRLSASPGTKAYGRLTVMAQYFCQVVPVLEVPPHSFAPPPKVDSAVVRLLPYAEKPFPCKDVNVLRQLCTTAFNMRRKTLRNNLKQVLSDEEFEQLGIDQNLRPEQISVEQYVAMANMVCDKQA.

6 residues coordinate S-adenosyl-L-methionine: Asn18, Leu20, Gly45, Glu66, Asp91, and Asn112.

The protein belongs to the class I-like SAM-binding methyltransferase superfamily. rRNA adenine N(6)-methyltransferase family. RsmA subfamily.

It localises to the cytoplasm. The enzyme catalyses adenosine(1518)/adenosine(1519) in 16S rRNA + 4 S-adenosyl-L-methionine = N(6)-dimethyladenosine(1518)/N(6)-dimethyladenosine(1519) in 16S rRNA + 4 S-adenosyl-L-homocysteine + 4 H(+). Its function is as follows. Specifically dimethylates two adjacent adenosines (A1518 and A1519) in the loop of a conserved hairpin near the 3'-end of 16S rRNA in the 30S particle. May play a critical role in biogenesis of 30S subunits. This Shewanella oneidensis (strain ATCC 700550 / JCM 31522 / CIP 106686 / LMG 19005 / NCIMB 14063 / MR-1) protein is Ribosomal RNA small subunit methyltransferase A.